Reading from the N-terminus, the 466-residue chain is Ribulose bisphosphate carboxylase large chain (466 aa).

Position 4 is an N6,N6,N6-trimethyllysine (K4). Substrate is bound by residues N113 and T163. Residue K165 is the Proton acceptor of the active site. K167 contributes to the substrate binding site. Residues K191, D193, and E194 each contribute to the Mg(2+) site. K191 bears the N6-carboxylysine mark. The Proton acceptor role is filled by H284. Positions 285, 317, and 369 each coordinate substrate.

The protein belongs to the RuBisCO large chain family. Type I subfamily. In terms of assembly, heterohexadecamer of 8 large chains and 8 small chains; disulfide-linked. The disulfide link is formed within the large subunit homodimers. Mg(2+) is required as a cofactor. In terms of processing, the disulfide bond which can form in the large chain dimeric partners within the hexadecamer appears to be associated with oxidative stress and protein turnover.

It is found in the plastid. The protein resides in the chloroplast. It carries out the reaction 2 (2R)-3-phosphoglycerate + 2 H(+) = D-ribulose 1,5-bisphosphate + CO2 + H2O. It catalyses the reaction D-ribulose 1,5-bisphosphate + O2 = 2-phosphoglycolate + (2R)-3-phosphoglycerate + 2 H(+). Functionally, ruBisCO catalyzes two reactions: the carboxylation of D-ribulose 1,5-bisphosphate, the primary event in carbon dioxide fixation, as well as the oxidative fragmentation of the pentose substrate in the photorespiration process. Both reactions occur simultaneously and in competition at the same active site. The chain is Ribulose bisphosphate carboxylase large chain from Proboscidea louisianica (Louisiana Devil's-claw).